The chain runs to 173 residues: T-complex protein 1 subunit alpha (173 aa).

The protein belongs to the TCP-1 chaperonin family. As to quaternary structure, component of the chaperonin-containing T-complex (TRiC), a heterooligomeric complex of about 850 to 900 kDa that forms two stacked rings, 12 to 16 nm in diameter.

The protein resides in the cytoplasm. Its subcellular location is the cytosol. Functionally, component of the chaperonin-containing T-complex (TRiC), a molecular chaperone complex that assists the folding of proteins upon ATP hydrolysis. This chain is T-complex protein 1 subunit alpha, found in Ambystoma mexicanum (Axolotl).